Consider the following 224-residue polypeptide: 7-cyano-7-deazaguanine synthase (224 aa).

10–20 (LSGGLDSATVV) provides a ligand contact to ATP. Positions 189, 199, 202, and 205 each coordinate Zn(2+).

It belongs to the QueC family. Zn(2+) is required as a cofactor.

The enzyme catalyses 7-carboxy-7-deazaguanine + NH4(+) + ATP = 7-cyano-7-deazaguanine + ADP + phosphate + H2O + H(+). Its pathway is purine metabolism; 7-cyano-7-deazaguanine biosynthesis. Its function is as follows. Catalyzes the ATP-dependent conversion of 7-carboxy-7-deazaguanine (CDG) to 7-cyano-7-deazaguanine (preQ(0)). The polypeptide is 7-cyano-7-deazaguanine synthase (Pseudomonas putida (strain ATCC 700007 / DSM 6899 / JCM 31910 / BCRC 17059 / LMG 24140 / F1)).